The sequence spans 472 residues: Pentatricopeptide repeat-containing protein At5g46100 (472 aa).

PPR repeat units lie at residues 50 to 84 (DQSS…NCVV), 85 to 119 (SEDI…DCDP), 120 to 154 (SQKA…GLPP), 155 to 190 (TVAS…GCDP), 191 to 225 (DSYT…DCAP), 226 to 260 (TVVT…GIEP), 261 to 295 (NVFT…GCRP), 296 to 330 (NMVT…GLKP), 331 to 365 (DAGL…GITP), 373 to 406 (HVKT…GISV), and 407 to 441 (EVET…GCIP).

Belongs to the PPR family. P subfamily.

The polypeptide is Pentatricopeptide repeat-containing protein At5g46100 (Arabidopsis thaliana (Mouse-ear cress)).